Consider the following 159-residue polypeptide: SsrA-binding protein (159 aa).

This sequence belongs to the SmpB family.

The protein resides in the cytoplasm. Its function is as follows. Required for rescue of stalled ribosomes mediated by trans-translation. Binds to transfer-messenger RNA (tmRNA), required for stable association of tmRNA with ribosomes. tmRNA and SmpB together mimic tRNA shape, replacing the anticodon stem-loop with SmpB. tmRNA is encoded by the ssrA gene; the 2 termini fold to resemble tRNA(Ala) and it encodes a 'tag peptide', a short internal open reading frame. During trans-translation Ala-aminoacylated tmRNA acts like a tRNA, entering the A-site of stalled ribosomes, displacing the stalled mRNA. The ribosome then switches to translate the ORF on the tmRNA; the nascent peptide is terminated with the 'tag peptide' encoded by the tmRNA and targeted for degradation. The ribosome is freed to recommence translation, which seems to be the essential function of trans-translation. This chain is SsrA-binding protein, found in Coxiella burnetii (strain RSA 493 / Nine Mile phase I).